Reading from the N-terminus, the 214-residue chain is Coiled-coil domain-containing protein 169 (214 aa).

The stretch at 56–138 forms a coiled coil; that stretch reads SEWKTRYETQ…YAFRLEQESK (83 aa). The segment at 154-214 is disordered; it reads MTQVSGSNQV…RSNHLPKLNP (61 aa). 2 stretches are compositionally biased toward polar residues: residues 155–166 and 185–195; these read TQVSGSNQVSKR and HNSMNQKTTNA.

The protein belongs to the CCDC169 family.

The chain is Coiled-coil domain-containing protein 169 (Ccdc169) from Mus musculus (Mouse).